The sequence spans 615 residues: Vitamin B12 transporter BtuB (615 aa).

The first 20 residues, 1-20 (MIKKVSLMTALSVTAFSGWA), serve as a signal peptide directing secretion. A TonB box motif is present at residues 25–32 (DSLVVTAN). The TBDR plug domain maps to 37-151 (PANTVLAPTS…IGGVVNIITT (115 aa)). Cyanocob(III)alamin-binding positions include serine 84, asparagine 91, and 109–110 (VT). A TBDR beta-barrel domain is found at 154–615 (KDGTTLNAGV…EYTLSGSYTF (462 aa)). 3 beta stranded membrane passes run 157 to 164 (TTLNAGVG), 168 to 177 (YQNYGGSTQQ), and 183 to 194 (TRVTLAGDYTYT). Aspartate 198, glutamine 210, aspartate 212, and aspartate 214 together coordinate Ca(2+). The next 2 beta stranded transmembrane spans lie at 216–226 (YMNKTIYGALE) and 231–247 (DQWS…NRTA). Ca(2+) is bound by residues tyrosine 248 and aspartate 249. Alanine 250 provides a ligand contact to cyanocob(III)alamin. Residue aspartate 262 coordinates Ca(2+). Beta stranded transmembrane passes span 264 to 278 (RQLY…LRFN), 280 to 297 (GIFH…KDYN), 310 to 326 (TLDE…NSVD), 329 to 338 (HGNVGAGVDW), 354 to 370 (TNLR…QKFG), 372 to 382 (FTLEGAARSDD), 386 to 401 (FGRH…WEFI), 404 to 418 (YRFI…KAPN), 435 to 444 (ESKQWEGAFE), 450 to 459 (VSWRVSAYRN), 474 to 491 (YYNV…TASF), 495 to 510 (PLTH…ARNA), 518 to 530 (RRAK…QLDT), 536 to 551 (DWSL…YDTD), 559 to 573 (KVKM…LAVS), 586 to 597 (IANLFDKDYETV), and 603 to 615 (AGRE…SYTF). Threonine 310 serves as a coordination point for cyanocob(III)alamin. Arginine 518 is a binding site for cyanocob(III)alamin. A TonB C-terminal box motif is present at residues 598–615 (YGYETAGREYTLSGSYTF).

The protein belongs to the TonB-dependent receptor family. BtuB (TC 1.B.14.3.1) subfamily.

It localises to the cell outer membrane. Involved in the active translocation of vitamin B12 (cyanocobalamin) across the outer membrane to the periplasmic space. It derives its energy for transport by interacting with the trans-periplasmic membrane protein TonB. The sequence is that of Vitamin B12 transporter BtuB from Enterobacter sp. (strain 638).